The following is a 192-amino-acid chain: Glutaredoxin-C9 (192 aa).

A Glutaredoxin domain is found at 89-191 (YERVARMASG…PLLKQAGALW (103 aa)). A disulfide bridge links C109 with C112. The short motif at 189-192 (ALWL) is the Responsive for interaction with TGA factors element.

Belongs to the glutaredoxin family. CC-type subfamily.

The protein resides in the cytoplasm. It localises to the nucleus. In terms of biological role, has a glutathione-disulfide oxidoreductase activity in the presence of NADPH and glutathione reductase. Reduces low molecular weight disulfides and proteins. This Oryza sativa subsp. japonica (Rice) protein is Glutaredoxin-C9 (GRXC9).